The following is a 187-amino-acid chain: Small ribosomal subunit protein uS5 (187 aa).

The S5 DRBM domain occupies 20–83 (FADRLVAINR…EQAKRQMIRV (64 aa)). The disordered stretch occupies residues 155 to 187 (KKEQSPRSVAQRRGKKVADILPKRDEAPAEAEA). A compositionally biased stretch (basic and acidic residues) spans 170–181 (KVADILPKRDEA).

It belongs to the universal ribosomal protein uS5 family. In terms of assembly, part of the 30S ribosomal subunit. Contacts proteins S4 and S8.

With S4 and S12 plays an important role in translational accuracy. Its function is as follows. Located at the back of the 30S subunit body where it stabilizes the conformation of the head with respect to the body. This is Small ribosomal subunit protein uS5 from Ruegeria sp. (strain TM1040) (Silicibacter sp.).